Consider the following 255-residue polypeptide: Hydroxyacylglutathione hydrolase (255 aa).

Residues histidine 56, histidine 58, aspartate 60, histidine 61, histidine 114, aspartate 133, and histidine 171 each contribute to the Zn(2+) site.

The protein belongs to the metallo-beta-lactamase superfamily. Glyoxalase II family. As to quaternary structure, monomer. It depends on Zn(2+) as a cofactor.

The catalysed reaction is an S-(2-hydroxyacyl)glutathione + H2O = a 2-hydroxy carboxylate + glutathione + H(+). It functions in the pathway secondary metabolite metabolism; methylglyoxal degradation; (R)-lactate from methylglyoxal: step 2/2. Its function is as follows. Thiolesterase that catalyzes the hydrolysis of S-D-lactoyl-glutathione to form glutathione and D-lactic acid. In Nitrobacter hamburgensis (strain DSM 10229 / NCIMB 13809 / X14), this protein is Hydroxyacylglutathione hydrolase.